We begin with the raw amino-acid sequence, 563 residues long: Beta-catenin-like protein 1 (563 aa).

At Met-1 the chain carries N-acetylmethionine. The tract at residues Met-1–Ser-81 is disordered. The Nuclear localization signal signature appears at Lys-16–Thr-33. Over residues Gly-34 to Glu-45 the composition is skewed to basic and acidic residues. Residues Asp-66 to Asp-78 show a composition bias toward acidic residues. HEAT repeat units follow at residues Glu-79–Thr-129 and Tyr-134–Glu-176. At Lys-91 the chain carries N6-acetyllysine. The Nuclear export signal (NES) motif lies at Met-130–Leu-140. ARM repeat units lie at residues Glu-178 to Phe-228, Arg-229 to Asn-273, Asp-274 to Leu-323, Ser-325 to Gly-363, and Pro-364 to Asn-417. Ser-389 carries the post-translational modification Phosphoserine. Positions Asp-476 to Ile-540 form a coiled coil. Ser-545 bears the Phosphoserine mark.

In terms of assembly, component of the PRP19-CDC5L splicing complex composed of a core complex comprising a homotetramer of PRPF19, CDC5L, PLRG1 and BCAS2, and at least three less stably associated proteins CTNNBL1, CWC15 and HSPA8. Interacts directly with CWC15 and CDC5L in the complex. Interacts with AICDA; the interaction is important for the antibody diversification activity of AICDA. Interacts with PRPF31 (via its NLS). Interacts (via its N-terminal NLS) with KPNA1 and KPNA2.

It is found in the nucleus. Its function is as follows. Component of the PRP19-CDC5L complex that forms an integral part of the spliceosome and is required for activating pre-mRNA splicing. Participates in AID/AICDA-mediated somatic hypermutation (SHM) and class-switch recombination (CSR), 2 processes resulting in the production of high-affinity, mutated isotype-switched antibodies. The protein is Beta-catenin-like protein 1 (Ctnnbl1) of Mus musculus (Mouse).